Here is a 243-residue protein sequence, read N- to C-terminus: Pyridoxine 5'-phosphate synthase (243 aa).

Asparagine 9 is a 3-amino-2-oxopropyl phosphate binding site. 11-12 contributes to the 1-deoxy-D-xylulose 5-phosphate binding site; that stretch reads DH. Arginine 20 is a binding site for 3-amino-2-oxopropyl phosphate. Histidine 45 acts as the Proton acceptor in catalysis. Positions 47 and 52 each coordinate 1-deoxy-D-xylulose 5-phosphate. Glutamate 72 (proton acceptor) is an active-site residue. Threonine 102 is a 1-deoxy-D-xylulose 5-phosphate binding site. Residue histidine 193 is the Proton donor of the active site. Residues glycine 194 and 215 to 216 contribute to the 3-amino-2-oxopropyl phosphate site; that span reads GH.

It belongs to the PNP synthase family. As to quaternary structure, homooctamer; tetramer of dimers.

The protein localises to the cytoplasm. It catalyses the reaction 3-amino-2-oxopropyl phosphate + 1-deoxy-D-xylulose 5-phosphate = pyridoxine 5'-phosphate + phosphate + 2 H2O + H(+). The protein operates within cofactor biosynthesis; pyridoxine 5'-phosphate biosynthesis; pyridoxine 5'-phosphate from D-erythrose 4-phosphate: step 5/5. Its function is as follows. Catalyzes the complicated ring closure reaction between the two acyclic compounds 1-deoxy-D-xylulose-5-phosphate (DXP) and 3-amino-2-oxopropyl phosphate (1-amino-acetone-3-phosphate or AAP) to form pyridoxine 5'-phosphate (PNP) and inorganic phosphate. This chain is Pyridoxine 5'-phosphate synthase, found in Shigella dysenteriae serotype 1 (strain Sd197).